The following is a 633-amino-acid chain: DNA-directed RNA polymerase subunit gamma (633 aa).

Zn(2+)-binding residues include C74, C76, C89, and C92. 3 residues coordinate Mg(2+): D471, D473, and D475.

Belongs to the RNA polymerase beta' chain family. RpoC1 subfamily. In terms of assembly, in cyanobacteria the RNAP catalytic core is composed of 2 alpha, 1 beta, 1 beta', 1 gamma and 1 omega subunit. When a sigma factor is associated with the core the holoenzyme is formed, which can initiate transcription. Requires Mg(2+) as cofactor. Zn(2+) serves as cofactor.

It catalyses the reaction RNA(n) + a ribonucleoside 5'-triphosphate = RNA(n+1) + diphosphate. DNA-dependent RNA polymerase catalyzes the transcription of DNA into RNA using the four ribonucleoside triphosphates as substrates. The chain is DNA-directed RNA polymerase subunit gamma from Prochlorococcus marinus (strain MIT 9211).